Reading from the N-terminus, the 245-residue chain is Uridylate kinase (245 aa).

Position 12–15 (12–15) interacts with ATP; that stretch reads KLSG. Positions 20 to 25 are involved in allosteric activation by GTP; the sequence is GEKGVG. Residue Gly54 participates in UMP binding. Gly55 and Arg59 together coordinate ATP. UMP-binding positions include Asp74 and 135 to 142; that span reads IGSPYFST. ATP-binding residues include Asn163, Tyr169, and Asp172.

This sequence belongs to the UMP kinase family. As to quaternary structure, homohexamer.

The protein localises to the cytoplasm. The catalysed reaction is UMP + ATP = UDP + ADP. It participates in pyrimidine metabolism; CTP biosynthesis via de novo pathway; UDP from UMP (UMPK route): step 1/1. Allosterically activated by GTP. Inhibited by UTP. In terms of biological role, catalyzes the reversible phosphorylation of UMP to UDP. In Streptococcus thermophilus (strain ATCC BAA-250 / LMG 18311), this protein is Uridylate kinase.